The chain runs to 191 residues: Protein Ves (191 aa).

The protein belongs to the Ves family.

This chain is Protein Ves, found in Shigella boydii serotype 18 (strain CDC 3083-94 / BS512).